We begin with the raw amino-acid sequence, 266 residues long: Protein crossbronx-like (266 aa).

A UBC core domain is found at 15 to 178 (KQGYHILAEY…VQEQAILSRN (164 aa)). The tract at residues 234–266 (SSRQLDEEEANQVEKLHRGRIPEHQREESEVSL) is disordered. Residues 245-266 (QVEKLHRGRIPEHQREESEVSL) show a composition bias toward basic and acidic residues.

It belongs to the ubiquitin-conjugating enzyme family. FTS subfamily.

The chain is Protein crossbronx-like from Drosophila melanogaster (Fruit fly).